Here is a 670-residue protein sequence, read N- to C-terminus: UvrABC system protein B (670 aa).

In terms of domain architecture, Helicase ATP-binding spans glutamate 26–arginine 183. Glycine 39–threonine 46 is a binding site for ATP. The Beta-hairpin motif lies at tyrosine 92–valine 115. The Helicase C-terminal domain occupies glutamine 431–leucine 597. Residues aspartate 630–glutamine 665 enclose the UVR domain.

It belongs to the UvrB family. In terms of assembly, forms a heterotetramer with UvrA during the search for lesions. Interacts with UvrC in an incision complex.

Its subcellular location is the cytoplasm. The UvrABC repair system catalyzes the recognition and processing of DNA lesions. A damage recognition complex composed of 2 UvrA and 2 UvrB subunits scans DNA for abnormalities. Upon binding of the UvrA(2)B(2) complex to a putative damaged site, the DNA wraps around one UvrB monomer. DNA wrap is dependent on ATP binding by UvrB and probably causes local melting of the DNA helix, facilitating insertion of UvrB beta-hairpin between the DNA strands. Then UvrB probes one DNA strand for the presence of a lesion. If a lesion is found the UvrA subunits dissociate and the UvrB-DNA preincision complex is formed. This complex is subsequently bound by UvrC and the second UvrB is released. If no lesion is found, the DNA wraps around the other UvrB subunit that will check the other stand for damage. The chain is UvrABC system protein B from Serratia proteamaculans (strain 568).